We begin with the raw amino-acid sequence, 365 residues long: G-protein coupled receptor 68 (365 aa).

The Extracellular segment spans residues 1 to 12 (MGNITADNSSMS). N-linked (GlcNAc...) asparagine glycans are attached at residues N3 and N8. A helical transmembrane segment spans residues 13 to 49 (CTIDHTIHQTLAPVVYVTVLVVGFPANCLSLYFGYLQ). Intrachain disulfides connect C13–C258 and C94–C172. Topologically, residues 50–53 (IKAR) are cytoplasmic. The helical transmembrane segment at 54–84 (NELGVYLCNLTVADLFYICSLPFWLQYVLQH) threads the bilayer. Over 85-89 (DNWSH) the chain is Extracellular. A helical membrane pass occupies residues 90-125 (GDLSCQVCGILLYENIYISVGFLCCISVDRYLAVAH). Residues 126-133 (PFRFHQFR) lie on the Cytoplasmic side of the membrane. Residues 134–160 (TLKAAVGVSVVIWAKELLTSIYFLMHE) form a helical membrane-spanning segment. Residues 161-176 (EVIEDENQHRVCFEHY) lie on the Extracellular side of the membrane. An extracellular loop 2 (ECL2) region spans residues 161–176 (EVIEDENQHRVCFEHY). A helical transmembrane segment spans residues 177-214 (PIQAWQRAINYYRFLVGFLFPICLLLASYQGILRAVRR). At 215-218 (SHGT) the chain is on the cytoplasmic side. Residues 219–254 (QKSRKDQIQRLVLSTVVIFLACFLPYHVLLLVRSVW) form a helical membrane-spanning segment. Over 255 to 260 (EASCDF) the chain is Extracellular. A helical membrane pass occupies residues 261–289 (AKGVFNAYHFSLLLTSFNCVADPVLYCFV). At 290–365 (SETTHRDLAR…SGGFPTGRLA (76 aa)) the chain is on the cytoplasmic side. The disordered stretch occupies residues 345-365 (HPAFQTPNSPGSGGFPTGRLA). The span at 355 to 365 (GSGGFPTGRLA) shows a compositional bias: gly residues.

Belongs to the G-protein coupled receptor 1 family. In terms of tissue distribution, found at low level in a wide range of tissues, but significantly expressed in lung, kidney, bone and nervous system.

It is found in the cell membrane. Activated by a network of residues that connects an extracellular-facing cavity to Glu-149, a conserved charged residue buried in the transmembrane core of the receptor. Protonation likely drives conformational changes in extracellular loop 2 (ECL2), which stabilizes movement of transmembrane 3 (TM3) and a series of rearrangements that connect the extracellular-facing cavity to Glu-149, a residue only conserved in proton-sensing G-protein coupled receptors. Activated in an allosteric manner by divalent metal ions at the extracellular surface following the order: Cd(2+) &gt; Co(2+) &gt; Ni(2+) &gt; Zn(2+) &gt; Fe(2+) &gt; Ca(2+) &gt; Mg(2+). Activated by the benzodiazepine drug lorazepam, a non-selective GPR68 positive allosteric modulator. Activated by ogerin (ZINC67740571), a selective GPR68 positive allosteric modulator. Activated by small molecule MS48107, a selective positive allosteric modulator. Inhibited by small molecule ogremorphin, inducing ferroptosis in cancer cells. Functionally, proton-sensing G-protein coupled receptor activated by extracellular pH, which is required to monitor pH changes and generate adaptive reactions. The receptor is almost silent at pH 7.8 but fully activated at pH 6.8. Ligand binding causes a conformation change that triggers signaling via guanine nucleotide-binding proteins (G proteins) and modulates the activity of downstream effectors, such as phospholipase C. GPR68 is mainly coupled to G(q) G proteins and mediates production of diacylglycerol (DAG) and inositol 1,4,5-trisphosphate (IP3). Acts as a key mechanosensor of fluid shear stress and membrane stretch. Expressed in endothelial cells of small-diameter resistance arteries, where it mediates flow-induced dilation in response to shear stress. May represents an osteoblastic pH sensor regulating cell-mediated responses to acidosis in bone. Acts as a regulator of calcium-sensing receptor CASR in a seesaw manner: GPR68-mediated signaling inhibits CASR signaling in response to protons, while CASR inhibits GPR68 in presence of extracellular calcium. This chain is G-protein coupled receptor 68, found in Homo sapiens (Human).